The following is a 75-amino-acid chain: Small ribosomal subunit protein bS18 (75 aa).

This sequence belongs to the bacterial ribosomal protein bS18 family. In terms of assembly, part of the 30S ribosomal subunit. Forms a tight heterodimer with protein bS6.

In terms of biological role, binds as a heterodimer with protein bS6 to the central domain of the 16S rRNA, where it helps stabilize the platform of the 30S subunit. The polypeptide is Small ribosomal subunit protein bS18 (Shewanella baltica (strain OS223)).